We begin with the raw amino-acid sequence, 437 residues long: MAASSWRGAVLLRTVSGLWQAGPDAAREWMTRLPSLLGFQQRCVSCVAGPAFSGPRLASASRPNGQNSALDCFLGLSQPDNSLPFRVPAVSVHRDEQDLLLVHRPDMPENPRVLRVVLLGAPNAGKSTLSNQLLGRKVFPVSKKVHTTRSQALGVITEKETQVILLDTPGLISPAKQKRHHLELSLLEDPWKSMESADLVVVLVDVSDKWTRNQLSPQVLRCLTQFSQVPSILVMNKVDCLKQKSVLLELTAALTEGVVNGKKLKTKQALRSRPDTHCPSPAAQGPNPQPVRDPQQMGWPHFQEIFMLSALSQEDVKTLKQYLLAQARPGPWEFHSEVLTSQTPEEICANMIREKLLEYLPEEVPYNVQQKTVVWDEGPSGELVIEQKLLVSKESHMKILIGPKGYLIAQIAQEVGRDLMNIFLCEVQLRLSVKLLK.

A mitochondrion-targeting transit peptide spans 1-43; that stretch reads MAASSWRGAVLLRTVSGLWQAGPDAAREWMTRLPSLLGFQQRC. The region spanning 112–330 is the Era-type G domain; it reads RVLRVVLLGA…QYLLAQARPG (219 aa). The interval 120 to 127 is G1; it reads GAPNAGKS. 120-127 provides a ligand contact to GTP; sequence GAPNAGKS. The segment at 146–150 is G2; the sequence is HTTRS. The segment at 167 to 170 is G3; that stretch reads DTPG. 167–171 provides a ligand contact to GTP; it reads DTPGL. Position 173 is a phosphoserine (Ser173). 236–239 contacts GTP; it reads NKVD. The interval 236 to 239 is G4; that stretch reads NKVD. The tract at residues 264–296 is disordered; the sequence is LKTKQALRSRPDTHCPSPAAQGPNPQPVRDPQQ. A G5 region spans residues 308–310; that stretch reads LSA. In terms of domain architecture, KH type-2 spans 360–437; that stretch reads LPEEVPYNVQ…QLRLSVKLLK (78 aa).

Belongs to the TRAFAC class TrmE-Era-EngA-EngB-Septin-like GTPase superfamily. Era GTPase family.

The protein localises to the mitochondrion matrix. It is found in the mitochondrion inner membrane. Functionally, probable GTPase that plays a role in the mitochondrial ribosomal small subunit assembly. Specifically binds the 12S mitochondrial rRNA (12S mt-rRNA) to a 33 nucleotide section delineating the 3' terminal stem-loop region. May act as a chaperone that protects the 12S mt-rRNA on the 28S mitoribosomal subunit during ribosomal small subunit assembly. The polypeptide is GTPase Era, mitochondrial (ERAL1) (Bos taurus (Bovine)).